A 651-amino-acid polypeptide reads, in one-letter code: Bromodomain-containing protein 7 (651 aa).

Lysine 21 participates in a covalent cross-link: Glycyl lysine isopeptide (Lys-Gly) (interchain with G-Cter in SUMO2). The disordered stretch occupies residues 34 to 103; the sequence is VTELSTGSSG…RDRAENEVDR (70 aa). Over residues 35-45 the composition is skewed to polar residues; sequence TELSTGSSGHD. The span at 47–57 shows a compositional bias: basic and acidic residues; it reads SLFEDRSDHDK. The span at 58 to 69 shows a compositional bias: basic residues; sequence HKDRKRKKRKKG. The Nuclear localization signal signature appears at 65-96; it reads KRKKGEKQAPGEEKGRKRRRVKEDKKKRDRDR. A compositionally biased stretch (basic and acidic residues) spans 70 to 103; sequence EKQAPGEEKGRKRRRVKEDKKKRDRDRAENEVDR. Residues lysine 127, lysine 186, lysine 197, lysine 201, lysine 212, and lysine 241 each participate in a glycyl lysine isopeptide (Lys-Gly) (interchain with G-Cter in SUMO2) cross-link. The 105-residue stretch at 131–235 folds into the Bromo domain; it reads VEQTPLQEAL…HSGMKILSQE (105 aa). Positions 252–316 are disordered; the sequence is KTRKQKERTD…RSSNSEREHE (65 aa). A phosphoserine mark is found at serine 279 and serine 289. Residues 290–316 show a composition bias toward basic and acidic residues; it reads PAKDNKRKDKDVLEDKWRSSNSEREHE. Residue lysine 305 forms a Glycyl lysine isopeptide (Lys-Gly) (interchain with G-Cter in SUMO2) linkage. Lysine 328 carries the N6-acetyllysine modification. Lysine 344 is covalently cross-linked (Glycyl lysine isopeptide (Lys-Gly) (interchain with G-Cter in SUMO2)). Position 380 is a phosphoserine (serine 380). A Glycyl lysine isopeptide (Lys-Gly) (interchain with G-Cter in SUMO2) cross-link involves residue lysine 389. Residues serine 475, serine 482, and serine 483 each carry the phosphoserine modification. The stretch at 536–567 forms a coiled coil; that stretch reads SEEAEVFQRKLDETTRLLRELQEAQNERLSTR. Serine 621 is subject to Phosphoserine.

Interacts with IRF2 and HNRPUL1. Interacts (via N-terminus) with TP53. Interacts (via C-terminus) with EP300. Interacts with BRCA1. Interacts (via bromo domain) with histone H3 (via N-terminus) acetylated at 'Lys-14' (H3K14ac). Has low affinity for histone H3 acetylated at 'Lys-9' (H3K9ac). Has the highest affinity for histone H3 that is acetylated both at 'Lys-9' (H3K9ac) and at 'Lys-14' (H3K14ac). Has very low affinity for non-acetylated histone H3. Interacts (via bromo domain) with histone H4 (via N-terminus) acetylated at 'Lys-8' (H3K8ac) (in vitro). Interacts with TRIM24, PTPN13 and DVL1. Identified in a complex with SMARCA4/BRG1, SMARCC1/BAF155, SMARCE1/BAF57, DPF2/BAF45D and ARID2, subunits of the SWI/SNF-B (PBAF) chromatin remodeling complex. As to expression, ubiquitous.

Its subcellular location is the nucleus. The protein localises to the chromosome. Acts both as coactivator and as corepressor. May play a role in chromatin remodeling. Transcriptional corepressor that down-regulates the expression of target genes. Binds to target promoters, leading to increased histone H3 acetylation at 'Lys-9' (H3K9ac). Binds to the ESR1 promoter. Recruits BRCA1 and POU2F1 to the ESR1 promoter. Coactivator for TP53-mediated activation of transcription of a set of target genes. Required for TP53-mediated cell-cycle arrest in response to oncogene activation. Promotes acetylation of TP53 at 'Lys-382', and thereby promotes efficient recruitment of TP53 to target promoters. Inhibits cell cycle progression from G1 to S phase. Activator of the Wnt signaling pathway in a DVL1-dependent manner by negatively regulating the GSK3B phosphotransferase activity. Induces dephosphorylation of GSK3B at 'Tyr-216'. Down-regulates TRIM24-mediated activation of transcriptional activation by AR. This chain is Bromodomain-containing protein 7 (Brd7), found in Mus musculus (Mouse).